Consider the following 35-residue polypeptide: Mu-theraphotoxin-Pm1a (35 aa).

3 disulfide bridges follow: Cys-3–Cys-17, Cys-10–Cys-22, and Cys-16–Cys-29. The residue at position 35 (Phe-35) is a Phenylalanine amide.

Belongs to the neurotoxin 10 (Hwtx-1) family. 62 (Vatx) subfamily. In terms of tissue distribution, expressed by the venom gland.

The protein resides in the secreted. Functionally, gating-modifier toxin with weak activity on Nav1.7/SCN9A and Nav1.8/SCN10A. Inhibits Nav1.7/SCN9A peak current (IC(50)=334 nM) and shifts the voltage dependence of activation to more depolarised membrane potentials. Shows 21% peak current inhibition (at 10 uM) on Nav1.8/SCN10A sodium channels. The sequence is that of Mu-theraphotoxin-Pm1a from Poecilotheria metallica (Metallic blue ornamental tree spider).